A 1068-amino-acid chain; its full sequence is Focal adhesion kinase 1 (1068 aa).

Residues 1–26 (MAAAYLDPNLNHNPSTNAKSRLSTGM) are disordered. Over residues 10-23 (LNHNPSTNAKSRLS) the composition is skewed to polar residues. An FERM domain is found at 35–355 (RVLRVFHYFE…GYCRLVSGAS (321 aa)). Residues Y403 and Y413 each carry the phosphotyrosine modification. Positions 435–693 (IELGRCIGEG…ELKAQLSTIL (259 aa)) constitute a Protein kinase domain. Residues 441–447 (IGEGQFG), K467, and 513–515 (ELC) contribute to the ATP site. The active-site Proton acceptor is D559. Residues Y589 and Y590 each carry the phosphotyrosine; by autocatalysis modification. The segment covering 699–710 (QQEERMRMESRR) has biased composition (basic and acidic residues). Disordered regions lie at residues 699 to 750 (QQEE…QHMM) and 869 to 912 (GNQH…DGYN). Phosphotyrosine is present on residues Y874 and Y941.

The protein belongs to the protein kinase superfamily. Tyr protein kinase family. FAK subfamily. In terms of processing, phosphorylated on tyrosine residues; phosphorylated kinase is first detected during gastrulation, suggesting that tyrosine phosphorylation is developmentally regulated.

It is found in the cell junction. The protein localises to the focal adhesion. Its subcellular location is the cell membrane. It localises to the cytoplasm. The protein resides in the cytoskeleton. It is found in the cilium basal body. It carries out the reaction L-tyrosyl-[protein] + ATP = O-phospho-L-tyrosyl-[protein] + ADP + H(+). In terms of biological role, non-receptor protein-tyrosine kinase implicated in signaling pathways involved in cell motility, proliferation and apoptosis. Activated by tyrosine-phosphorylation in response to either integrin clustering induced by cell adhesion or antibody cross-linking, or via G-protein coupled receptor (GPCR) occupancy by ligands such as bombesin or lysophosphatidic acid, or via LDL receptor occupancy. Microtubule-induced dephosphorylation at Tyr-397 is crucial for the induction of focal adhesion disassembly. The chain is Focal adhesion kinase 1 (ptk2) from Xenopus laevis (African clawed frog).